The sequence spans 934 residues: 2-oxoglutarate dehydrogenase E1 component (934 aa).

Positions 515–537 (RAAQDKIDKSDKMDNPDMERPES) are enriched in basic and acidic residues. Residues 515–544 (RAAQDKIDKSDKMDNPDMERPESLQEPLQS) are disordered.

The protein belongs to the alpha-ketoglutarate dehydrogenase family. Homodimer. Part of the 2-oxoglutarate dehydrogenase (OGDH) complex composed of E1 (2-oxoglutarate dehydrogenase), E2 (dihydrolipoamide succinyltransferase) and E3 (dihydrolipoamide dehydrogenase); the complex contains multiple copies of the three enzymatic components (E1, E2 and E3). Thiamine diphosphate serves as cofactor.

It carries out the reaction N(6)-[(R)-lipoyl]-L-lysyl-[protein] + 2-oxoglutarate + H(+) = N(6)-[(R)-S(8)-succinyldihydrolipoyl]-L-lysyl-[protein] + CO2. E1 component of the 2-oxoglutarate dehydrogenase (OGDH) complex which catalyzes the decarboxylation of 2-oxoglutarate, the first step in the conversion of 2-oxoglutarate to succinyl-CoA and CO(2). In Staphylococcus haemolyticus (strain JCSC1435), this protein is 2-oxoglutarate dehydrogenase E1 component.